A 358-amino-acid polypeptide reads, in one-letter code: 3-dehydroquinate synthase (358 aa).

NAD(+) contacts are provided by residues 102–106 (GVVGD), 126–127 (TT), lysine 138, and lysine 147. Positions 180, 243, and 260 each coordinate Zn(2+).

This sequence belongs to the sugar phosphate cyclases superfamily. Dehydroquinate synthase family. Requires Co(2+) as cofactor. The cofactor is Zn(2+). It depends on NAD(+) as a cofactor.

The protein resides in the cytoplasm. It carries out the reaction 7-phospho-2-dehydro-3-deoxy-D-arabino-heptonate = 3-dehydroquinate + phosphate. It functions in the pathway metabolic intermediate biosynthesis; chorismate biosynthesis; chorismate from D-erythrose 4-phosphate and phosphoenolpyruvate: step 2/7. In terms of biological role, catalyzes the conversion of 3-deoxy-D-arabino-heptulosonate 7-phosphate (DAHP) to dehydroquinate (DHQ). The chain is 3-dehydroquinate synthase from Shouchella clausii (strain KSM-K16) (Alkalihalobacillus clausii).